The following is a 187-amino-acid chain: Ribosome maturation factor RimM (187 aa).

One can recognise a PRC barrel domain in the interval 91–183; the sequence is DDGFYDHELE…ILVLTPPEGL (93 aa).

The protein belongs to the RimM family. Binds ribosomal protein uS19.

The protein resides in the cytoplasm. Its function is as follows. An accessory protein needed during the final step in the assembly of 30S ribosomal subunit, possibly for assembly of the head region. Essential for efficient processing of 16S rRNA. May be needed both before and after RbfA during the maturation of 16S rRNA. It has affinity for free ribosomal 30S subunits but not for 70S ribosomes. This chain is Ribosome maturation factor RimM, found in Corynebacterium jeikeium (strain K411).